The primary structure comprises 203 residues: Outer-membrane lipoprotein LolB (203 aa).

The signal sequence occupies residues 1–20 (MNRSRRLALLCLGVPLLLQA). Cys-21 carries the N-palmitoyl cysteine lipid modification. Cys-21 carries the S-diacylglycerol cysteine lipid modification.

This sequence belongs to the LolB family. Monomer.

It is found in the cell outer membrane. Functionally, plays a critical role in the incorporation of lipoproteins in the outer membrane after they are released by the LolA protein. The chain is Outer-membrane lipoprotein LolB from Cupriavidus taiwanensis (strain DSM 17343 / BCRC 17206 / CCUG 44338 / CIP 107171 / LMG 19424 / R1) (Ralstonia taiwanensis (strain LMG 19424)).